A 349-amino-acid polypeptide reads, in one-letter code: Ion-translocating oxidoreductase complex subunit D (349 aa).

The next 3 membrane-spanning stretches (helical) occupy residues C36 to S56, S77 to V99, and A124 to A144. FMN phosphoryl threonine is present on T185. A run of 5 helical transmembrane segments spans residues G212–L232, W239–L259, A265–T285, A291–I311, and G315–I335.

It belongs to the NqrB/RnfD family. As to quaternary structure, the complex is composed of six subunits: RnfA, RnfB, RnfC, RnfD, RnfE and RnfG. The cofactor is FMN.

The protein localises to the cell inner membrane. Part of a membrane-bound complex that couples electron transfer with translocation of ions across the membrane. This Shewanella sp. (strain MR-4) protein is Ion-translocating oxidoreductase complex subunit D.